We begin with the raw amino-acid sequence, 301 residues long: uncharacterized protein (301 aa).

Residues serine 44 and tyrosine 107 each act as charge relay system in the active site. The Proton donor role is filled by tyrosine 133. The active-site Schiff-base intermediate with substrate is the lysine 162.

This sequence belongs to the DapA family. Homotetramer.

Its subcellular location is the cytoplasm. This is an uncharacterized protein from Pyrobaculum arsenaticum (strain DSM 13514 / JCM 11321 / PZ6).